Consider the following 162-residue polypeptide: Deoxyuridine 5'-triphosphate nucleotidohydrolase (162 aa).

Belongs to the dUTPase family. As to quaternary structure, homotrimer. It depends on Mg(2+) as a cofactor.

The protein localises to the host cytoplasm. Its subcellular location is the virion. It carries out the reaction dUTP + H2O = dUMP + diphosphate + H(+). Its function is as follows. The viral dUTPase may play a role in lowering the dUTP concentration in natural infections to minimize misincorporation of deoxyuridine into the viral DNA and ensure the fidelity of genome replication. This chain is Deoxyuridine 5'-triphosphate nucleotidohydrolase, found in Ornithodoros (relapsing fever ticks).